The chain runs to 143 residues: Granulocyte-macrophage colony-stimulating factor (143 aa).

An N-terminal signal peptide occupies residues 1–17 (MWLQNLLLLGTVVCSFS). A glycan (O-linked (GalNAc...) threonine) is linked at Thr27. 2 N-linked (GlcNAc...) asparagine glycosylation sites follow: Asn44 and Asn54. Cystine bridges form between Cys70-Cys112 and Cys104-Cys137.

It belongs to the GM-CSF family. In terms of assembly, monomer. The signaling GM-CSF receptor complex is a dodecamer of two head-to-head hexamers of two alpha, two beta, and two ligand subunits.

It is found in the secreted. In terms of biological role, cytokine that stimulates the growth and differentiation of hematopoietic precursor cells from various lineages, including granulocytes, macrophages, eosinophils and erythrocytes. This chain is Granulocyte-macrophage colony-stimulating factor (CSF2), found in Bos taurus (Bovine).